Here is a 614-residue protein sequence, read N- to C-terminus: UvrABC system protein C (614 aa).

Residues 20–98 (TAPGVYRMYA…IKSLSPRYNV (79 aa)) form the GIY-YIG domain. Residues 207 to 242 (DELTRELGEQMQAASEALEFEQAARLRDLISSLRSM) form the UVR domain.

Belongs to the UvrC family. Interacts with UvrB in an incision complex.

The protein resides in the cytoplasm. Its function is as follows. The UvrABC repair system catalyzes the recognition and processing of DNA lesions. UvrC both incises the 5' and 3' sides of the lesion. The N-terminal half is responsible for the 3' incision and the C-terminal half is responsible for the 5' incision. The protein is UvrABC system protein C of Stenotrophomonas maltophilia (strain R551-3).